Reading from the N-terminus, the 156-residue chain is UPF0336 protein SACE_6876 (156 aa).

In terms of domain architecture, MaoC-like spans 8-128 (IGREYPPTPA…DFLTVRAEIT (121 aa)).

It belongs to the UPF0336 family.

The protein is UPF0336 protein SACE_6876 of Saccharopolyspora erythraea (strain ATCC 11635 / DSM 40517 / JCM 4748 / NBRC 13426 / NCIMB 8594 / NRRL 2338).